The sequence spans 573 residues: (R)-mandelonitrile lyase 3 (573 aa).

A signal peptide spans 1 to 27; that stretch reads MVKSTMSAVLLVLHIFVLHLQYSEVQS. An N-linked (GlcNAc...) asparagine glycan is attached at asparagine 30. 63 to 64 lines the FAD pocket; that stretch reads TA. Residue asparagine 75 is glycosylated (N-linked (GlcNAc...) asparagine). Residues 82–83, valine 129, threonine 133, and 137–140 each bind FAD; these read ER and NAGV. Asparagine 145, asparagine 150, asparagine 162, and asparagine 218 each carry an N-linked (GlcNAc...) asparagine glycan. Valine 244 contributes to the FAD binding site. 3 N-linked (GlcNAc...) asparagine glycosylation sites follow: asparagine 252, asparagine 267, and asparagine 309. Cysteine 356 contacts substrate. Residues asparagine 380, asparagine 402, asparagine 420, and asparagine 467 are each glycosylated (N-linked (GlcNAc...) asparagine). Cysteines 427 and 478 form a disulfide. Position 485 (tyrosine 485) interacts with substrate. Residues 486-487 and glycine 515 contribute to the FAD site; that span reads WH. The Proton donor role is filled by histidine 487. The active-site Proton acceptor is histidine 525. 526–527 is a binding site for FAD; sequence PQ.

Belongs to the GMC oxidoreductase family. In terms of assembly, monomer. FAD serves as cofactor.

The protein resides in the vacuole. It is found in the aleurone grain. The enzyme catalyses (R)-mandelonitrile = benzaldehyde + hydrogen cyanide. Functionally, involved in cyanogenesis, the release of HCN from injured tissues. Catalyzes the stereospecific addition of HCN to a variety of aldehydes in vitro. It is a major seed constituent, and could have the additional role of a storage form for reduced nitrogen. The chain is (R)-mandelonitrile lyase 3 (MDL3) from Prunus serotina (Black cherry).